The following is a 112-amino-acid chain: Large ribosomal subunit protein bL17 (112 aa).

This sequence belongs to the bacterial ribosomal protein bL17 family. As to quaternary structure, part of the 50S ribosomal subunit. Contacts protein L32.

The protein is Large ribosomal subunit protein bL17 of Desulforamulus reducens (strain ATCC BAA-1160 / DSM 100696 / MI-1) (Desulfotomaculum reducens).